Reading from the N-terminus, the 187-residue chain is UPF0340 protein SPG_0604 (187 aa).

This sequence belongs to the UPF0340 family.

The protein is UPF0340 protein SPG_0604 of Streptococcus pneumoniae serotype 19F (strain G54).